The following is a 136-amino-acid chain: Replication enhancer (136 aa).

This sequence belongs to the geminiviridae replication enhancer protein family. Homooligomer. Interacts with the replication-associated protein (REP). Interacts with host proliferating cell nuclear antigen (PCNA). Interacts with host retinoblastoma-related protein 1 (RBR1), and may thereby deregulate the host cell cycle. Oligomerization and interaction with PCNA are necessary for optimal replication enhancement.

Functionally, increases viral DNA accumulation. Enhances infectivity and symptom expression. This is Replication enhancer from Beet curly top virus (strain California/Logan) (BCTV).